Here is a 390-residue protein sequence, read N- to C-terminus: Flap endonuclease 1-2 (390 aa).

The segment at 1-108 (MGIHQLMQFL…GELARRKKLK (108 aa)) is N-domain. Mg(2+) is bound at residue Asp-34. Arg-74 contacts DNA. 5 residues coordinate Mg(2+): Asp-90, Glu-162, Glu-164, Asp-183, and Asp-185. Positions 126 to 254 (QALLQNQRTT…GTAYKLIKEY (129 aa)) are I-domain. Glu-162 is a DNA binding site. Residues Gly-232 and Asp-234 each contribute to the DNA site. Residue Asp-234 coordinates Mg(2+). An interaction with PCNA region spans residues 348 to 356 (FQSRLENFF). The segment at 359–390 (TTKIIHPNNSKAKAKSNKKTEQPQKSGGKKKI) is disordered.

This sequence belongs to the XPG/RAD2 endonuclease family. FEN1 subfamily. In terms of assembly, interacts with PCNA. Three molecules of FEN1 bind to one PCNA trimer with each molecule binding to one PCNA monomer. PCNA stimulates the nuclease activity without altering cleavage specificity. It depends on Mg(2+) as a cofactor. Post-translationally, phosphorylated. Phosphorylation upon DNA damage induces relocalization to the nuclear plasma.

It localises to the nucleus. The protein localises to the nucleolus. It is found in the nucleoplasm. Its subcellular location is the mitochondrion. Its function is as follows. Structure-specific nuclease with 5'-flap endonuclease and 5'-3' exonuclease activities involved in DNA replication and repair. During DNA replication, cleaves the 5'-overhanging flap structure that is generated by displacement synthesis when DNA polymerase encounters the 5'-end of a downstream Okazaki fragment. It enters the flap from the 5'-end and then tracks to cleave the flap base, leaving a nick for ligation. Also involved in the long patch base excision repair (LP-BER) pathway, by cleaving within the apurinic/apyrimidinic (AP) site-terminated flap. Acts as a genome stabilization factor that prevents flaps from equilibrating into structures that lead to duplications and deletions. Also possesses 5'-3' exonuclease activity on nicked or gapped double-stranded DNA, and exhibits RNase H activity. Also involved in replication and repair of rDNA and in repairing mitochondrial DNA. The polypeptide is Flap endonuclease 1-2 (Paramecium tetraurelia).